Reading from the N-terminus, the 259-residue chain is Hydroxyethylthiazole kinase (259 aa).

A substrate-binding site is contributed by methionine 50. The ATP site is built by arginine 122 and threonine 168. Glycine 195 provides a ligand contact to substrate.

Belongs to the Thz kinase family. Requires Mg(2+) as cofactor.

It carries out the reaction 5-(2-hydroxyethyl)-4-methylthiazole + ATP = 4-methyl-5-(2-phosphooxyethyl)-thiazole + ADP + H(+). It functions in the pathway cofactor biosynthesis; thiamine diphosphate biosynthesis; 4-methyl-5-(2-phosphoethyl)-thiazole from 5-(2-hydroxyethyl)-4-methylthiazole: step 1/1. Its function is as follows. Catalyzes the phosphorylation of the hydroxyl group of 4-methyl-5-beta-hydroxyethylthiazole (THZ). In Escherichia coli O127:H6 (strain E2348/69 / EPEC), this protein is Hydroxyethylthiazole kinase.